The chain runs to 490 residues: Cyclin-A2-1 (490 aa).

The disordered stretch occupies residues 34 to 76 (FAPSVSLPARTERKQTAKGKTKRGALDEITSASTATSAPQPKR). Positions 63 to 72 (TSASTATSAP) are enriched in polar residues.

The protein belongs to the cyclin family. Cyclin AB subfamily.

This is Cyclin-A2-1 (CYCA2-1) from Oryza sativa subsp. japonica (Rice).